The primary structure comprises 427 residues: Serine--tRNA ligase (427 aa).

L-serine is bound at residue 235-237 (TAE). ATP contacts are provided by residues 266–268 (RRE) and V282. Residue E289 participates in L-serine binding. An ATP-binding site is contributed by 353 to 356 (EASS). S389 is an L-serine binding site.

This sequence belongs to the class-II aminoacyl-tRNA synthetase family. Type-1 seryl-tRNA synthetase subfamily. Homodimer. The tRNA molecule binds across the dimer.

The protein localises to the cytoplasm. The enzyme catalyses tRNA(Ser) + L-serine + ATP = L-seryl-tRNA(Ser) + AMP + diphosphate + H(+). It catalyses the reaction tRNA(Sec) + L-serine + ATP = L-seryl-tRNA(Sec) + AMP + diphosphate + H(+). It participates in aminoacyl-tRNA biosynthesis; selenocysteinyl-tRNA(Sec) biosynthesis; L-seryl-tRNA(Sec) from L-serine and tRNA(Sec): step 1/1. Catalyzes the attachment of serine to tRNA(Ser). Is also able to aminoacylate tRNA(Sec) with serine, to form the misacylated tRNA L-seryl-tRNA(Sec), which will be further converted into selenocysteinyl-tRNA(Sec). In Chloroherpeton thalassium (strain ATCC 35110 / GB-78), this protein is Serine--tRNA ligase.